The primary structure comprises 925 residues: Nuclear pore complex protein Nup107 (925 aa).

N-acetylmethionine is present on Met1. Ser4, Ser10, Ser11, and Ser37 each carry phosphoserine. The segment at 20-66 is disordered; it reads TRTARKQSAQKRVLLQASQDENFGNTTPRNQVIPRTPSSFRQPFTPT. Composition is skewed to polar residues over residues 35-49 and 55-66; these read QASQ…TPRN and TPSSFRQPFTPT. Phosphothreonine occurs at positions 46 and 55. Phosphoserine occurs at positions 57 and 58. Arg60 carries the post-translational modification Asymmetric dimethylarginine; alternate. Omega-N-methylarginine; alternate is present on Arg60. Thr64 carries the post-translational modification Phosphothreonine. An Omega-N-methylarginine modification is found at Arg68. Phosphoserine is present on residues Ser69 and Ser86.

It belongs to the nucleoporin Nup84/Nup107 family. As to quaternary structure, part of the nuclear pore complex (NPC). Forms part of the Nup160 subcomplex in the nuclear pore which is composed of NUP160, NUP133, NUP107 and Nup96; this complex plays a role in RNA export and in tethering Nup98 and NUP153 to the nucleus. Does not interact with TPR. Interacts with ZNF106. In terms of tissue distribution, ubiquitously expressed in fetal and adult tissues.

The protein localises to the nucleus membrane. It is found in the nucleus. The protein resides in the nuclear pore complex. It localises to the chromosome. Its subcellular location is the centromere. The protein localises to the kinetochore. In terms of biological role, plays a role in the nuclear pore complex (NPC) assembly and/or maintenance. Required for the assembly of peripheral proteins into the NPC. May anchor NUP62 to the NPC. Involved in nephrogenesis. This chain is Nuclear pore complex protein Nup107 (NUP107), found in Homo sapiens (Human).